We begin with the raw amino-acid sequence, 359 residues long: Guanine nucleotide-binding protein subunit alpha-11 (359 aa).

2 S-palmitoyl cysteine lipidation sites follow: cysteine 9 and cysteine 10. One can recognise a G-alpha domain in the interval 38 to 359; it reads RELKLLLLGT…QLNLKEYNLV (322 aa). Residues 41-54 are G1 motif; that stretch reads KLLLLGTGESGKST. GTP is bound by residues 46–53 and 180–183; these read GTGESGKS and LRVR. Serine 53 contacts Mg(2+). Residues 178–186 are G2 motif; the sequence is DVLRVRVPT. A Mg(2+)-binding site is contributed by threonine 186. The interval 201-210 is G3 motif; it reads FRMVDVGGQR. Positions 270–277 are G4 motif; that stretch reads ILFLNKKD. Residues 274–277 and alanine 331 contribute to the GTP site; that span reads NKKD. The segment at 329 to 334 is G5 motif; the sequence is TCATDT.

Belongs to the G-alpha family. G(q) subfamily. As to quaternary structure, g proteins are composed of 3 units; alpha, beta and gamma. The alpha chain contains the guanine nucleotide binding site. Interacts with RGS22. Interacts with NTSR1.

It localises to the cell membrane. The protein localises to the cytoplasm. The enzyme catalyses GTP + H2O = GDP + phosphate + H(+). Functionally, guanine nucleotide-binding proteins (G proteins) function as transducers downstream of G protein-coupled receptors (GPCRs) in numerous signaling cascades. The alpha chain contains the guanine nucleotide binding site and alternates between an active, GTP-bound state and an inactive, GDP-bound state. Signaling by an activated GPCR promotes GDP release and GTP binding. The alpha subunit has a low GTPase activity that converts bound GTP to GDP, thereby terminating the signal. Both GDP release and GTP hydrolysis are modulated by numerous regulatory proteins. Signaling is mediated via phospholipase C-beta-dependent inositol lipid hydrolysis for signal propagation: activates phospholipase C-beta: following GPCR activation, GNA11 activates PLC-beta (PLCB1, PLCB2, PLCB3 or PLCB4), leading to production of diacylglycerol (DAG) and inositol 1,4,5-trisphosphate (IP3). Transduces FFAR4 signaling in response to long-chain fatty acids (LCFAs). Together with GNAQ, required for heart development. In the respiratory epithelium, transmits OXGR1-dependent signals that lead to downstream intracellular Ca(2+) release and mucocilliary clearance of airborne pathogens. The polypeptide is Guanine nucleotide-binding protein subunit alpha-11 (GNA11) (Sus scrofa (Pig)).